Consider the following 444-residue polypeptide: Probable D-serine dehydratase (444 aa).

Residue Lys118 is modified to N6-(pyridoxal phosphate)lysine.

The protein belongs to the serine/threonine dehydratase family. DsdA subfamily. The cofactor is pyridoxal 5'-phosphate.

It catalyses the reaction D-serine = pyruvate + NH4(+). The polypeptide is Probable D-serine dehydratase (Acinetobacter baumannii (strain ACICU)).